The chain runs to 102 residues: Small ribosomal subunit protein uS10 (102 aa).

The protein belongs to the universal ribosomal protein uS10 family. Part of the 30S ribosomal subunit.

Functionally, involved in the binding of tRNA to the ribosomes. The sequence is that of Small ribosomal subunit protein uS10 from Lactobacillus helveticus (strain DPC 4571).